Consider the following 484-residue polypeptide: tRNA sulfurtransferase (484 aa).

One can recognise a THUMP domain in the interval 63-167 (QAFGERLACI…RDKLYMVTKR (105 aa)). ATP is bound by residues 185 to 186 (LI), Lys267, Gly289, and Gln298. A disulfide bridge connects residues Cys346 and Cys458. Residues 406–484 (IETNEVVIDI…GYTNVKVYRP (79 aa)) enclose the Rhodanese domain. Cys458 (cysteine persulfide intermediate) is an active-site residue.

The protein belongs to the ThiI family.

The protein localises to the cytoplasm. The enzyme catalyses [ThiI sulfur-carrier protein]-S-sulfanyl-L-cysteine + a uridine in tRNA + 2 reduced [2Fe-2S]-[ferredoxin] + ATP + H(+) = [ThiI sulfur-carrier protein]-L-cysteine + a 4-thiouridine in tRNA + 2 oxidized [2Fe-2S]-[ferredoxin] + AMP + diphosphate. It carries out the reaction [ThiS sulfur-carrier protein]-C-terminal Gly-Gly-AMP + S-sulfanyl-L-cysteinyl-[cysteine desulfurase] + AH2 = [ThiS sulfur-carrier protein]-C-terminal-Gly-aminoethanethioate + L-cysteinyl-[cysteine desulfurase] + A + AMP + 2 H(+). Its pathway is cofactor biosynthesis; thiamine diphosphate biosynthesis. In terms of biological role, catalyzes the ATP-dependent transfer of a sulfur to tRNA to produce 4-thiouridine in position 8 of tRNAs, which functions as a near-UV photosensor. Also catalyzes the transfer of sulfur to the sulfur carrier protein ThiS, forming ThiS-thiocarboxylate. This is a step in the synthesis of thiazole, in the thiamine biosynthesis pathway. The sulfur is donated as persulfide by IscS. This is tRNA sulfurtransferase from Shewanella putrefaciens (strain CN-32 / ATCC BAA-453).